Consider the following 78-residue polypeptide: Broad mercury transporter MerE (78 aa).

2 consecutive transmembrane segments (helical) span residues 19-39 (LWGALAVLTCPCHLPILAAVL) and 47-67 (FLGEHWGVAALALTGLFVLAV).

The protein localises to the cell inner membrane. In terms of biological role, broad mercury transporter that mediates the transport of both CH(3)Hg(I) and Hg(II) across the membrane. The chain is Broad mercury transporter MerE from Shigella flexneri.